Here is a 677-residue protein sequence, read N- to C-terminus: Beta-galactosidase (677 aa).

An N-terminal signal peptide occupies residues 1–23 (MPGFLVRILPLLLALLLLGPTRG). A propeptide spanning residues 24-28 (LRNAT) is cleaved from the precursor. Residue asparagine 26 is glycosylated (N-linked (GlcNAc...) asparagine). Substrate is bound by residues tyrosine 83, glutamate 129, and asparagine 187. Glutamate 188 functions as the Proton donor in the catalytic mechanism. Cysteines 195 and 230 form a disulfide. An N-linked (GlcNAc...) asparagine glycan is attached at asparagine 247. Residue glutamate 268 is the Nucleophile of the active site. Tyrosine 333 is a binding site for substrate. N-linked (GlcNAc...) asparagine glycans are attached at residues asparagine 464, asparagine 498, asparagine 545, and asparagine 555. Residues cysteine 626 and cysteine 634 are joined by a disulfide bond. Residues 654-677 (SKPVEKKLMPSPPQKNKDSWLDHV) form a disordered region. The span at 668 to 677 (KNKDSWLDHV) shows a compositional bias: basic and acidic residues.

It belongs to the glycosyl hydrolase 35 family. Homodimer. May form higher multimers.

The protein resides in the lysosome. The enzyme catalyses Hydrolysis of terminal non-reducing beta-D-galactose residues in beta-D-galactosides.. Its function is as follows. Cleaves beta-linked terminal galactosyl residues from gangliosides, glycoproteins, and glycosaminoglycans. The chain is Beta-galactosidase (GLB1) from Pongo abelii (Sumatran orangutan).